The primary structure comprises 227 residues: 2-heptyl-1-hydroxyquinolin-4(1H)-one methyltransferase (227 aa).

Belongs to the methyltransferase superfamily. As to quaternary structure, monomer.

Its subcellular location is the cytoplasm. It catalyses the reaction 2-heptyl-1-hydroxy-4(1H)-quinolinone + S-adenosyl-L-methionine = 2-heptyl-1-methoxy-4(1H)-quinolinone + S-adenosyl-L-homocysteine + H(+). The catalysed reaction is 3-bromo-2-heptyl-1-hydroxy-4(1H)-quinolinone + S-adenosyl-L-methionine = 3-bromo-2-heptyl-1-methoxy-4(1H)-quinolinone + S-adenosyl-L-homocysteine + H(+). Its function is as follows. Involved in cellular response to chemical stress and may contribute to resistance toward antimicrobial natural compounds as well as drugs. Catalyzes the methylation and detoxification of the P.aeruginosa toxin 2-heptyl-1-hydroxy-4(1H)-quinolinone (HQNO) to 2-heptyl-1-methoxy-4(1H)-quinolinone (HMOQ). Can also methylate 3-bromo-2-heptyl-1-hydroxy-4(1H)-quinolinone, and shows much lower activity with 1-hydroxyquinolin-4(1H)-one, quercetin, 4-hydroxyquinolin-2(1H)-one (DHQ) and 4-hydroxyisoquinolin-1(2H)-one. This Mycobacteroides abscessus (strain ATCC 19977 / DSM 44196 / CCUG 20993 / CIP 104536 / JCM 13569 / NCTC 13031 / TMC 1543 / L948) (Mycobacterium abscessus) protein is 2-heptyl-1-hydroxyquinolin-4(1H)-one methyltransferase.